Consider the following 62-residue polypeptide: UPF0337 protein mll8179 (62 aa).

The disordered stretch occupies residues 1-42 (MRNMVNKDQVAGLAKQLKGSVKQAAGKATGNRRTQAEGMADK).

It belongs to the UPF0337 (CsbD) family.

This chain is UPF0337 protein mll8179, found in Mesorhizobium japonicum (strain LMG 29417 / CECT 9101 / MAFF 303099) (Mesorhizobium loti (strain MAFF 303099)).